We begin with the raw amino-acid sequence, 254 residues long: Imidazole glycerol phosphate synthase subunit HisF (254 aa).

Active-site residues include Asp12 and Asp131.

This sequence belongs to the HisA/HisF family. In terms of assembly, heterodimer of HisH and HisF.

It localises to the cytoplasm. The enzyme catalyses 5-[(5-phospho-1-deoxy-D-ribulos-1-ylimino)methylamino]-1-(5-phospho-beta-D-ribosyl)imidazole-4-carboxamide + L-glutamine = D-erythro-1-(imidazol-4-yl)glycerol 3-phosphate + 5-amino-1-(5-phospho-beta-D-ribosyl)imidazole-4-carboxamide + L-glutamate + H(+). Its pathway is amino-acid biosynthesis; L-histidine biosynthesis; L-histidine from 5-phospho-alpha-D-ribose 1-diphosphate: step 5/9. Functionally, IGPS catalyzes the conversion of PRFAR and glutamine to IGP, AICAR and glutamate. The HisF subunit catalyzes the cyclization activity that produces IGP and AICAR from PRFAR using the ammonia provided by the HisH subunit. This Desulfitobacterium hafniense (strain Y51) protein is Imidazole glycerol phosphate synthase subunit HisF.